A 416-amino-acid chain; its full sequence is Serine hydroxymethyltransferase (416 aa).

(6S)-5,6,7,8-tetrahydrofolate contacts are provided by residues Leu-119 and 123–125 (GHL). N6-(pyridoxal phosphate)lysine is present on Lys-228. Glu-243 contributes to the (6S)-5,6,7,8-tetrahydrofolate binding site.

The protein belongs to the SHMT family. In terms of assembly, homodimer. Pyridoxal 5'-phosphate is required as a cofactor.

The protein resides in the cytoplasm. It carries out the reaction (6R)-5,10-methylene-5,6,7,8-tetrahydrofolate + glycine + H2O = (6S)-5,6,7,8-tetrahydrofolate + L-serine. Its pathway is one-carbon metabolism; tetrahydrofolate interconversion. It participates in amino-acid biosynthesis; glycine biosynthesis; glycine from L-serine: step 1/1. Catalyzes the reversible interconversion of serine and glycine with tetrahydrofolate (THF) serving as the one-carbon carrier. This reaction serves as the major source of one-carbon groups required for the biosynthesis of purines, thymidylate, methionine, and other important biomolecules. Also exhibits THF-independent aldolase activity toward beta-hydroxyamino acids, producing glycine and aldehydes, via a retro-aldol mechanism. This Desulforapulum autotrophicum (strain ATCC 43914 / DSM 3382 / VKM B-1955 / HRM2) (Desulfobacterium autotrophicum) protein is Serine hydroxymethyltransferase.